The following is a 477-amino-acid chain: Trigger factor (477 aa).

The PPIase FKBP-type domain occupies 174–261 (GDIAVVSFKG…LKDLKEKELP (88 aa)). Residues 435 to 477 (VNEKTTKTSKATKTSKTTKATKTATKTTKTTKTTKTQNKKEKK) are disordered. Low complexity predominate over residues 442 to 470 (TSKATKTSKTTKATKTATKTTKTTKTTKT).

The protein belongs to the FKBP-type PPIase family. Tig subfamily.

The protein localises to the cytoplasm. The catalysed reaction is [protein]-peptidylproline (omega=180) = [protein]-peptidylproline (omega=0). Involved in protein export. Acts as a chaperone by maintaining the newly synthesized protein in an open conformation. Functions as a peptidyl-prolyl cis-trans isomerase. In Prochlorococcus marinus (strain MIT 9301), this protein is Trigger factor.